The following is a 158-amino-acid chain: 6,7-dimethyl-8-ribityllumazine synthase (158 aa).

Residues phenylalanine 23, 61 to 63 (SFE), and 85 to 87 (AVI) each bind 5-amino-6-(D-ribitylamino)uracil. Residue 90 to 91 (ET) coordinates (2S)-2-hydroxy-3-oxobutyl phosphate. Histidine 93 (proton donor) is an active-site residue. A 5-amino-6-(D-ribitylamino)uracil-binding site is contributed by phenylalanine 118. Arginine 132 lines the (2S)-2-hydroxy-3-oxobutyl phosphate pocket.

It belongs to the DMRL synthase family.

It catalyses the reaction (2S)-2-hydroxy-3-oxobutyl phosphate + 5-amino-6-(D-ribitylamino)uracil = 6,7-dimethyl-8-(1-D-ribityl)lumazine + phosphate + 2 H2O + H(+). It functions in the pathway cofactor biosynthesis; riboflavin biosynthesis; riboflavin from 2-hydroxy-3-oxobutyl phosphate and 5-amino-6-(D-ribitylamino)uracil: step 1/2. In terms of biological role, catalyzes the formation of 6,7-dimethyl-8-ribityllumazine by condensation of 5-amino-6-(D-ribitylamino)uracil with 3,4-dihydroxy-2-butanone 4-phosphate. This is the penultimate step in the biosynthesis of riboflavin. The protein is 6,7-dimethyl-8-ribityllumazine synthase of Prochlorococcus marinus (strain MIT 9215).